We begin with the raw amino-acid sequence, 93 residues long: U12-lycotoxin-Ls1a (93 aa).

Residues 1–18 (MKFAVILLFSLVVLTVAS) form the signal peptide. Positions 19 to 38 (ESVEEVRREIDIEDLPEQQR) are excised as a propeptide.

Belongs to the neurotoxin 31 family. Post-translationally, contains 5 disulfide bonds. In terms of tissue distribution, expressed by the venom gland.

The protein localises to the secreted. The polypeptide is U12-lycotoxin-Ls1a (Lycosa singoriensis (Wolf spider)).